Here is a 112-residue protein sequence, read N- to C-terminus: Ribosome-binding factor A (112 aa).

Belongs to the RbfA family. As to quaternary structure, monomer. Binds 30S ribosomal subunits, but not 50S ribosomal subunits or 70S ribosomes.

It localises to the cytoplasm. One of several proteins that assist in the late maturation steps of the functional core of the 30S ribosomal subunit. Associates with free 30S ribosomal subunits (but not with 30S subunits that are part of 70S ribosomes or polysomes). Required for efficient processing of 16S rRNA. May interact with the 5'-terminal helix region of 16S rRNA. The protein is Ribosome-binding factor A of Ruthia magnifica subsp. Calyptogena magnifica.